Reading from the N-terminus, the 596-residue chain is Cis-3-hydroxy-L-proline dehydratase (596 aa).

The Proton acceptor role is filled by S67.

The protein belongs to the AcnX family. As to quaternary structure, monomer. It depends on Fe(3+) as a cofactor.

The catalysed reaction is cis-3-hydroxy-L-proline = 1-pyrroline-2-carboxylate + H2O. Inhibited by Zn(2+). Not inhibited by pyrrole-2-carboxylate nor its derivative 2-thiophenecarboxylate. In terms of biological role, catalyzes the dehydration of cis-3-hydroxy-L-proline (c3LHyp) to Delta(1)-pyrroline-2-carboxylate (Pyr2C). No activity with L-proline, trans-4-hydroxy-L-proline (t4LHyp), cis-4-hydroxy-L-proline (c4LHyp), trans-3-hydroxy-L-proline (t3LHyp), D-proline, cis-4-hydroxy-D-proline (c4DHyp), trans-4-hydroxy-D-proline (t4DHyp) or L-serine as substrates. Because of the low catalytic efficiency, C3LHyp is likely not a main physiological substrate of this enzyme in H.jecorina. The chain is Cis-3-hydroxy-L-proline dehydratase from Hypocrea jecorina (strain QM6a) (Trichoderma reesei).